Reading from the N-terminus, the 271-residue chain is MGLAATRTKQRFGLDPRNTAWSNDTSRFGHQFLEKFGWKPGMGLGLSPMNSNTSHIKVSIKDDNVGLGAKLKRKDKKDEFDNGECAGLDVFQRILGRLNGKESKISEELDTQRKQKIIDGKWGIHFVKGEVLASTWDPKTHKLRNYSNAKKRKREGDDSEDEDDDDKEDKDSDKKKHKKHKKHKKDKKKDKKDKKEHKKHKKEEKRLKKEKRAEKTKETKKTSKLKSSESASNIPDAVNTRLSVRSKWIKQKRAALMDSKALNEIFMITND.

Positions 25–72 (TSRFGHQFLEKFGWKPGMGLGLSPMNSNTSHIKVSIKDDNVGLGAKLK) constitute a G-patch domain. A disordered region spans residues 147-239 (SNAKKRKREG…SASNIPDAVN (93 aa)). A compositionally biased stretch (acidic residues) spans 157-168 (DDSEDEDDDDKE). Residues 175–203 (KKHKKHKKHKKDKKKDKKDKKEHKKHKKE) show a composition bias toward basic residues. Residues 204-221 (EKRLKKEKRAEKTKETKK) are compositionally biased toward basic and acidic residues. A Phosphoserine modification is found at S230.

Belongs to the PINX1 family. Interacts with EST2.

Its subcellular location is the nucleus. It localises to the nucleolus. Involved in rRNA-processing at A0, A1 and A2 sites through its action in U18 and U24 snoRNA 3'-end final trimming. Negative regulator of telomerase through competition for binding to EST2 with TLC1. The sequence is that of Protein PXR1 (PXR1) from Saccharomyces cerevisiae (strain ATCC 204508 / S288c) (Baker's yeast).